Reading from the N-terminus, the 60-residue chain is Cytotoxin 1 (60 aa).

4 cysteine pairs are disulfide-bonded: cysteine 3-cysteine 21, cysteine 14-cysteine 38, cysteine 42-cysteine 53, and cysteine 54-cysteine 59.

Belongs to the three-finger toxin family. Short-chain subfamily. Type IA cytotoxin sub-subfamily. In terms of assembly, monomer in solution; Homodimer and oligomer in the presence of negatively charged lipids forming a pore with a size ranging between 20 and 30 Angstroms. In terms of tissue distribution, expressed by the venom gland.

It is found in the secreted. The protein resides in the target cell membrane. In terms of biological role, shows cytolytic activity on many different cells by forming pore in lipid membranes. In vivo, increases heart rate or kills the animal by cardiac arrest. In addition, it binds to heparin with high affinity, interacts with Kv channel-interacting protein 1 (KCNIP1) in a calcium-independent manner, and binds to integrin alpha-V/beta-3 (ITGAV/ITGB3) with moderate affinity. This Naja mossambica (Mozambique spitting cobra) protein is Cytotoxin 1.